Consider the following 579-residue polypeptide: Viral transcription factor IE2 (579 aa).

A compositionally biased stretch (basic and acidic residues) spans 1–11; it reads MESSAKRKMDP. 2 disordered regions span residues 1–30 and 99–161; these read MESSAKRKMDPDNPDEGPSSKVPRPETPVT and DSSS…VIIK. Over residues 99 to 133 the composition is skewed to polar residues; that stretch reads DSSSTGPTLTTHSCSVSSAPLNKPTPTSVAVTNTP. Glycyl lysine isopeptide (Lys-Gly) (interchain with G-Cter in SUMO) cross-links involve residues Lys-175 and Lys-180. Residues 199–202 carry the SUMO-interacting motif 1/SIM1 motif; it reads CIVI. The interval 200 to 208 is non-covalent SUMO1 binding region (SIM); the sequence is IVISDSEEE. Phosphoserine is present on residues Ser-203 and Ser-205. The tract at residues 206-335 is disordered; it reads EEEQGEEVET…SKRISELDNE (130 aa). 3 stretches are compositionally biased toward low complexity: residues 216-236, 259-270, and 301-316; these read RGATASSPSTGSGTPRVTSPT, SSSSSSCSSASD, and AASSSLLSCGHQSSGG. An SUMO-interacting motif 1/SIM2 motif is present at residues 409 to 412; it reads IQII. An SUMO-interacting motif 1/SIM3 motif is present at residues 500–503; the sequence is VDLL.

This sequence belongs to the HHV-5 IE2 protein family. As to quaternary structure, interacts with host SUMO-modified form of TATA-binding protein (TBP)-associated factor 12/TAF12 in a SIM-dependent manner; this interaction increases the transactivation activity of IE2. Interacts with host CHAF1A. Interacts with several components of the host transcriptional machinery including TBP, TF2B and CREB1. Interacts with host DNA replication licensing factor MCM3. Interacts with host PLSCR1; this interaction inhibits IE2 transactivating activity. In terms of processing, phosphorylated by host CK2 at Ser-203 and Ser-205; leading to enhanced SUMOylation. Post-translationally, SUMOylated; SUMOylation is enhanced when IE2 is phosphorylated by host CK2. The sumoylation is necessary for efficient replication of the virus and thus for the function of this viral transcription factor.

Its subcellular location is the host nucleus. In terms of biological role, stimulates viral early and late gene expression and thus play a crucial role in the regulation of productive infection. Selectively drives host RNA Pol II transcription initiation at a subset of viral early-late and late promoters without substantially affecting Pol II transcription of expressed host genes. Mechanistically, forms a repressive complex at the major immediate-early promoter region involving direct association with host nucleosomes and TBP. Concerning activation, stimulates transcription by binding nearby, but not within, core promoter regions. In addition, activates quiescent cells to reenter the cell cycle and up-regulates several E2F-responsive genes, which are responsible for pushing the cell into S phase. In S-phase, inhibits cellular DNA synthesis and blocks further cell cycle progression. The chain is Viral transcription factor IE2 (UL122) from Homo sapiens (Human).